The following is a 401-amino-acid chain: Tyrosine--tRNA ligase (401 aa).

The 'HIGH' region motif lies at 42 to 51 (PTAPDLHLGH). Residues 226–230 (KMSKS) carry the 'KMSKS' region motif. Lys-229 provides a ligand contact to ATP. Positions 336 to 397 (IALAQLLKQI…GKRRIAKLSI (62 aa)) constitute an S4 RNA-binding domain.

Belongs to the class-I aminoacyl-tRNA synthetase family. TyrS type 2 subfamily. In terms of assembly, homodimer.

The protein resides in the cytoplasm. The enzyme catalyses tRNA(Tyr) + L-tyrosine + ATP = L-tyrosyl-tRNA(Tyr) + AMP + diphosphate + H(+). In terms of biological role, catalyzes the attachment of tyrosine to tRNA(Tyr) in a two-step reaction: tyrosine is first activated by ATP to form Tyr-AMP and then transferred to the acceptor end of tRNA(Tyr). The chain is Tyrosine--tRNA ligase from Legionella pneumophila subsp. pneumophila (strain Philadelphia 1 / ATCC 33152 / DSM 7513).